We begin with the raw amino-acid sequence, 239 residues long: Uridylate kinase (239 aa).

ATP is bound at residue 10 to 13 (KLSG). Positions 18–23 (GEQGYG) are involved in allosteric activation by GTP. Residue G52 coordinates UMP. Positions 53 and 57 each coordinate ATP. Residues D72 and 133 to 140 (TGNPYFST) contribute to the UMP site. ATP-binding residues include N161, Y167, and E170.

This sequence belongs to the UMP kinase family. Homohexamer.

The protein localises to the cytoplasm. The catalysed reaction is UMP + ATP = UDP + ADP. It functions in the pathway pyrimidine metabolism; CTP biosynthesis via de novo pathway; UDP from UMP (UMPK route): step 1/1. Allosterically activated by GTP. Inhibited by UTP. Functionally, catalyzes the reversible phosphorylation of UMP to UDP. This chain is Uridylate kinase, found in Halalkalibacterium halodurans (strain ATCC BAA-125 / DSM 18197 / FERM 7344 / JCM 9153 / C-125) (Bacillus halodurans).